Consider the following 1066-residue polypeptide: Elongation factor 3 (1066 aa).

6 HEAT repeats span residues 112 to 149 (FIFE…VMSP), 151 to 188 (AAQQ…ACPE), 192 to 229 (ALMP…LISN), 231 to 268 (DIER…EVDS), 269 to 306 (ATLA…LVDN), and 312 to 353 (PFLG…VTGD). Threonine 418 is an ADP binding site. 2 consecutive ABC transporter domains span residues 454–672 (EEGE…YAEL) and 699–1015 (IKMK…KKEE). ADP is bound by residues asparagine 735, glutamate 944, asparagine 947, and histidine 973. The disordered stretch occupies residues 997–1066 (GHDWTESNSK…YDSADELEDL (70 aa)). Positions 1042–1054 (RKAKKDRMARKKA) are enriched in basic residues.

The protein belongs to the ABC transporter superfamily. ABCF family. EF3 subfamily.

The protein localises to the cytoplasm. It localises to the cytosol. The enzyme catalyses ATP + H2O = ADP + phosphate + H(+). Its pathway is protein biosynthesis; polypeptide chain elongation. Its function is as follows. Ribosome-dependent ATPase that functions in cytoplasmic translation elongation. Required for the ATP-dependent release of deacylated tRNA from the ribosomal E-site during protein biosynthesis. Stimulates the eEF1A-dependent binding of aminoacyl-tRNA to the ribosomal A-site, which has reduced affinity for tRNA as long as the E-site is occupied. Assists translation termination by stimulating the release of nascent protein from the ribosome by release factors. In Mycosarcoma maydis (Corn smut fungus), this protein is Elongation factor 3.